A 204-amino-acid polypeptide reads, in one-letter code: U1 small nuclear ribonucleoprotein C (204 aa).

The Matrin-type zinc-finger motif lies at 4–36 (FFCDYCDVYLTHDSMSVRKAHNSGRNHLRNVVD). Positions 65 to 204 (ANPMLPQNQP…GAGAPGHEKR (140 aa)) are disordered. 2 stretches are compositionally biased toward pro residues: residues 77–154 (GFPP…PGAP) and 166–192 (APPPFPGLPGMPPPGQGFPPGGPPGFA).

The protein belongs to the U1 small nuclear ribonucleoprotein C family. In terms of assembly, U1 snRNP is composed of the 7 core Sm proteins B/B', D1, D2, D3, E, F and G that assemble in a heptameric protein ring on the Sm site of the small nuclear RNA to form the core snRNP, and at least 3 U1 snRNP-specific proteins U1-70K, U1-A and U1-C. U1-C interacts with U1 snRNA and the 5' splice-site region of the pre-mRNA.

It localises to the nucleus. Its function is as follows. Component of the spliceosomal U1 snRNP, which is essential for recognition of the pre-mRNA 5' splice-site and the subsequent assembly of the spliceosome. U1-C is directly involved in initial 5' splice-site recognition for both constitutive and regulated alternative splicing. The interaction with the 5' splice-site seems to precede base-pairing between the pre-mRNA and the U1 snRNA. Stimulates commitment or early (E) complex formation by stabilizing the base pairing of the 5' end of the U1 snRNA and the 5' splice-site region. This chain is U1 small nuclear ribonucleoprotein C, found in Fusarium vanettenii (strain ATCC MYA-4622 / CBS 123669 / FGSC 9596 / NRRL 45880 / 77-13-4) (Fusarium solani subsp. pisi).